Here is a 329-residue protein sequence, read N- to C-terminus: Adenylate isopentenyltransferase 7, mitochondrial (329 aa).

The N-terminal 40 residues, 1-40, are a transit peptide targeting the mitochondrion; that stretch reads MKFSISSLKQVQPILCFKNKLSKVNVNSFLHPKEKVIFVM. Residue 41-48 coordinates ATP; the sequence is GATGSGKS.

It belongs to the IPP transferase family. In terms of tissue distribution, expressed in both the vascular stele and the phloem companion cells of the root, in endodermis of the root elongation zone, trichomes on young leaves, and some pollen tubes.

The protein resides in the mitochondrion. It carries out the reaction dimethylallyl diphosphate + ADP = N(6)-(dimethylallyl)adenosine 5'-diphosphate + diphosphate. The enzyme catalyses dimethylallyl diphosphate + ATP = N(6)-(dimethylallyl)adenosine 5'-triphosphate + diphosphate. Its function is as follows. Involved in cytokinin biosynthesis. Catalyzes the transfer of an isopentenyl group from dimethylallyl diphosphate (DMAPP) to ATP and ADP. The protein is Adenylate isopentenyltransferase 7, mitochondrial (IPT7) of Arabidopsis thaliana (Mouse-ear cress).